Consider the following 445-residue polypeptide: Elongation factor 1-alpha (445 aa).

Residues lysine 5–serine 230 enclose the tr-type G domain. The G1 stretch occupies residues glycine 14 to serine 21. Glycine 14–serine 21 lines the GTP pocket. The residue at position 55 (lysine 55) is an N6,N6-dimethyllysine. Residues cysteine 70–aspartate 74 are G2. Lysine 79 bears the N6,N6,N6-trimethyllysine mark. The G3 stretch occupies residues aspartate 91–glycine 94. GTP-binding positions include aspartate 91–histidine 95 and asparagine 153–aspartate 156. The tract at residues asparagine 153–aspartate 156 is G4. Lysine 187 is subject to N6,N6,N6-trimethyllysine. Residues serine 194–tryptophan 196 form a G5 region. At lysine 261 the chain carries N6-methyllysine. Lysine 306 and lysine 396 each carry N6,N6,N6-trimethyllysine.

Belongs to the TRAFAC class translation factor GTPase superfamily. Classic translation factor GTPase family. EF-Tu/EF-1A subfamily.

The protein localises to the cytoplasm. Its function is as follows. This protein promotes the GTP-dependent binding of aminoacyl-tRNA to the A-site of ribosomes during protein biosynthesis. The chain is Elongation factor 1-alpha (TEF) from Euglena gracilis.